The sequence spans 512 residues: Zinc metalloprotease mde10 (512 aa).

A signal peptide spans 1–15 (MRLVLLFSCVLAVSS). An N-linked (GlcNAc...) asparagine glycan is attached at Asn35. The 242-residue stretch at 65–306 (QTLWIGVVAD…KYVSLSCLSK (242 aa)) folds into the Peptidase M12B domain. Residue His229 participates in Zn(2+) binding. Residue Glu230 is part of the active site. Zn(2+) contacts are provided by His233 and His239. Intrachain disulfides connect Cys246–Cys254 and Cys374–Cys394. A Disintegrin domain is found at 315-402 (LGTCGNGIVE…KCPVDENWDD (88 aa)). N-linked (GlcNAc...) asparagine glycosylation occurs at Asn432.

The cofactor is Zn(2+). Post-translationally, glycosylated.

The protein localises to the endoplasmic reticulum. It is found in the spore wall. Functionally, has a role in the development of the spore envelope. This Schizosaccharomyces pombe (strain 972 / ATCC 24843) (Fission yeast) protein is Zinc metalloprotease mde10 (mde10).